The sequence spans 337 residues: Probable poly [ADP-ribose] polymerase DDB_G0278045 (337 aa).

Positions 21–231 (KKWDIIYKQR…NNNKNKNKNN (211 aa)) constitute a PARP catalytic domain. A compositionally biased stretch (low complexity) spans 218 to 242 (NNTNNNNKNKNKNNNKNNNKNIKIQ). Residues 218–247 (NNTNNNNKNKNKNNNKNNNKNIKIQNENKN) form a disordered region.

It carries out the reaction L-aspartyl-[protein] + NAD(+) = 4-O-(ADP-D-ribosyl)-L-aspartyl-[protein] + nicotinamide. The enzyme catalyses L-glutamyl-[protein] + NAD(+) = 5-O-(ADP-D-ribosyl)-L-glutamyl-[protein] + nicotinamide. The catalysed reaction is NAD(+) + (ADP-D-ribosyl)n-acceptor = nicotinamide + (ADP-D-ribosyl)n+1-acceptor + H(+).. The sequence is that of Probable poly [ADP-ribose] polymerase DDB_G0278045 from Dictyostelium discoideum (Social amoeba).